A 416-amino-acid chain; its full sequence is CinA-like protein (416 aa).

Belongs to the CinA family.

The polypeptide is CinA-like protein (Thermosynechococcus vestitus (strain NIES-2133 / IAM M-273 / BP-1)).